The sequence spans 473 residues: Photosystem II CP43 reaction center protein (473 aa).

A propeptide spanning residues 1 to 14 (MKTLYSRRRFYHVE) is cleaved from the precursor. Position 15 is an N-acetylthreonine (Thr-15). Thr-15 is modified (phosphothreonine). 5 consecutive transmembrane segments (helical) span residues 69–93 (LFEVAHFVPEKPMYEQGLILLPHLA), 134–155 (LLGPETLEESFPFFGYVWKDRN), 178–200 (KALYFGGVYDTWAPGGGDVRKIT), 255–275 (KPFAWARRALVWSGEAYLSYS), and 291–312 (WFNNTAYPSEFYGPTGPEASQA). Glu-367 is a [CaMn4O5] cluster binding site. The chain crosses the membrane as a helical span at residues 447–471 (RARAAAAGFEKGIDRDFEPVLSMTP).

Belongs to the PsbB/PsbC family. PsbC subfamily. In terms of assembly, PSII is composed of 1 copy each of membrane proteins PsbA, PsbB, PsbC, PsbD, PsbE, PsbF, PsbH, PsbI, PsbJ, PsbK, PsbL, PsbM, PsbT, PsbX, PsbY, PsbZ, Psb30/Ycf12, at least 3 peripheral proteins of the oxygen-evolving complex and a large number of cofactors. It forms dimeric complexes. It depends on Binds multiple chlorophylls and provides some of the ligands for the Ca-4Mn-5O cluster of the oxygen-evolving complex. It may also provide a ligand for a Cl- that is required for oxygen evolution. PSII binds additional chlorophylls, carotenoids and specific lipids. as a cofactor.

Its subcellular location is the plastid. It localises to the chloroplast thylakoid membrane. One of the components of the core complex of photosystem II (PSII). It binds chlorophyll and helps catalyze the primary light-induced photochemical processes of PSII. PSII is a light-driven water:plastoquinone oxidoreductase, using light energy to abstract electrons from H(2)O, generating O(2) and a proton gradient subsequently used for ATP formation. The polypeptide is Photosystem II CP43 reaction center protein (Solanum bulbocastanum (Wild potato)).